A 93-amino-acid chain; its full sequence is UPF0521 protein A (93 aa).

The stretch at 2–58 forms a coiled coil; the sequence is SLKEVITSLKNDFHSINKEIDSMKENNEKQEDKIFQEIKKLKLEMELLRKDNLSFKT.

This sequence belongs to the UPF0521 family.

The protein is UPF0521 protein A of Dictyostelium discoideum (Social amoeba).